Consider the following 226-residue polypeptide: Lipoprotein-releasing system ATP-binding protein LolD (226 aa).

One can recognise an ABC transporter domain in the interval 6–226 (LKLDNIRRAF…KMSEGLLVEV (221 aa)). 42-49 (GPSGAGKS) is an ATP binding site.

It belongs to the ABC transporter superfamily. Lipoprotein translocase (TC 3.A.1.125) family. As to quaternary structure, the complex is composed of two ATP-binding proteins (LolD) and two transmembrane proteins (LolC and LolE).

The protein localises to the cell inner membrane. In terms of biological role, part of the ABC transporter complex LolCDE involved in the translocation of mature outer membrane-directed lipoproteins, from the inner membrane to the periplasmic chaperone, LolA. Responsible for the formation of the LolA-lipoprotein complex in an ATP-dependent manner. This is Lipoprotein-releasing system ATP-binding protein LolD from Paramagnetospirillum magneticum (strain ATCC 700264 / AMB-1) (Magnetospirillum magneticum).